A 365-amino-acid polypeptide reads, in one-letter code: Probable protein kinase At2g41970 (365 aa).

A disordered region spans residues 1–50 (MFCCGGADEEPAGPPANQYAAPPNKAGNPNFGGGNRGEPRNPNAPRSGAP). Residues 73–354 (FGNKALIGEG…IVVKALQPLL (282 aa)) enclose the Protein kinase domain. Residues 79–87 (IGEGSYGRV) and Lys100 each bind ATP. Position 146 is a phosphotyrosine (Tyr146). The active-site Proton acceptor is Asp204. Phosphoserine is present on residues Ser208 and Ser238. Phosphothreonine occurs at positions 239 and 244. Tyr252 carries the post-translational modification Phosphotyrosine.

Belongs to the protein kinase superfamily. Tyr protein kinase family.

This chain is Probable protein kinase At2g41970, found in Arabidopsis thaliana (Mouse-ear cress).